A 479-amino-acid polypeptide reads, in one-letter code: Flap endonuclease 1 (479 aa).

The tract at residues 1–106 is N-domain; sequence MGIKGLTKFI…SELEKRGEKR (106 aa). Asp34 is a binding site for Mg(2+). Residues Arg47 and Arg72 each contribute to the DNA site. Mg(2+)-binding residues include Asp88, Glu160, Glu162, Asp181, and Asp183. Positions 124–266 are I-domain; sequence EIKKQSGRTV…KTAYNLIKEY (143 aa). Position 160 (Glu160) interacts with DNA. 2 residues coordinate DNA: Gly244 and Asp246. Residue Asp246 participates in Mg(2+) binding. Residues 349-357 are interaction with PCNA; it reads TQRRLDTFF. Residues 379-455 form a disordered region; the sequence is AKGKGKKREL…NSDSGNIKNE (77 aa). Over residues 403 to 428 the composition is skewed to basic and acidic residues; it reads NIKDEKKNTDKMDELKNKSDENFVKD.

It belongs to the XPG/RAD2 endonuclease family. FEN1 subfamily. As to quaternary structure, interacts with PCNA. Three molecules of FEN1 bind to one PCNA trimer with each molecule binding to one PCNA monomer. PCNA stimulates the nuclease activity without altering cleavage specificity. Mg(2+) is required as a cofactor. Phosphorylated. Phosphorylation upon DNA damage induces relocalization to the nuclear plasma.

The protein localises to the nucleus. Its subcellular location is the nucleolus. The protein resides in the nucleoplasm. It is found in the mitochondrion. In terms of biological role, structure-specific nuclease with 5'-flap endonuclease and 5'-3' exonuclease activities involved in DNA replication and repair. During DNA replication, cleaves the 5'-overhanging flap structure that is generated by displacement synthesis when DNA polymerase encounters the 5'-end of a downstream Okazaki fragment. It enters the flap from the 5'-end and then tracks to cleave the flap base, leaving a nick for ligation. Also involved in the long patch base excision repair (LP-BER) pathway, by cleaving within the apurinic/apyrimidinic (AP) site-terminated flap. Acts as a genome stabilization factor that prevents flaps from equilibrating into structures that lead to duplications and deletions. Also possesses 5'-3' exonuclease activity on nicked or gapped double-stranded DNA, and exhibits RNase H activity. Also involved in replication and repair of rDNA and in repairing mitochondrial DNA. The protein is Flap endonuclease 1 of Plasmodium chabaudi chabaudi.